Reading from the N-terminus, the 214-residue chain is Adenylate kinase (214 aa).

10–15 serves as a coordination point for ATP; that stretch reads GAGKGT. An NMP region spans residues 30–59; sequence STGDMFRAAIKAGTELGKQAKALMDEGKLV. Residues T31, R36, 57-59, 85-88, and Q92 each bind AMP; these read KLV and GFPR. The interval 122–159 is LID; sequence GRRVHQTSGRSYHIVYNPPKVEGKDDVTGEDLIIRADD. Residues R123 and 132-133 each bind ATP; that span reads SY. Residues R156 and R167 each contribute to the AMP site. Q200 serves as a coordination point for ATP.

It belongs to the adenylate kinase family. In terms of assembly, monomer.

The protein resides in the cytoplasm. It catalyses the reaction AMP + ATP = 2 ADP. Its pathway is purine metabolism; AMP biosynthesis via salvage pathway; AMP from ADP: step 1/1. Catalyzes the reversible transfer of the terminal phosphate group between ATP and AMP. Plays an important role in cellular energy homeostasis and in adenine nucleotide metabolism. This is Adenylate kinase from Haemophilus influenzae (strain PittEE).